The sequence spans 130 residues: Ribonuclease P protein component 2 (130 aa).

It belongs to the eukaryotic/archaeal RNase P protein component 2 family. As to quaternary structure, consists of a catalytic RNA component and at least 5 protein subunits.

It localises to the cytoplasm. It catalyses the reaction Endonucleolytic cleavage of RNA, removing 5'-extranucleotides from tRNA precursor.. In terms of biological role, part of ribonuclease P, a protein complex that generates mature tRNA molecules by cleaving their 5'-ends. The protein is Ribonuclease P protein component 2 of Methanococcus maripaludis (strain DSM 14266 / JCM 13030 / NBRC 101832 / S2 / LL).